The following is a 173-amino-acid chain: Calcineurin subunit B (173 aa).

4 EF-hand domains span residues 20 to 55 (DEID…AANP), 59 to 87 (RLMD…FSTK), 89 to 124 (NKKE…MVGN), and 130 to 165 (QLQQ…TNVY). 19 residues coordinate Ca(2+): D33, D35, S37, E44, D65, N67, S69, D71, E76, D102, D104, D106, Y108, E113, D143, D145, D147, K149, and E154.

It belongs to the calcineurin regulatory subunit family. Composed of a catalytic subunit (A) and a regulatory subunit (B).

In terms of biological role, regulatory subunit of calcineurin, a calcium-dependent, calmodulin stimulated protein phosphatase. Confers calcium sensitivity. In Yarrowia lipolytica (strain CLIB 122 / E 150) (Yeast), this protein is Calcineurin subunit B (CNB1).